Consider the following 416-residue polypeptide: PDZ and LIM domain protein 7 (416 aa).

The region spanning 1 to 85 (MESYKVMLNG…RLCLTLSRAQ (85 aa)) is the PDZ domain. Disordered stretches follow at residues 145 to 191 (CTPQ…AVDP) and 202 to 221 (TSTV…MQNR). Residues 168–181 (PGLAPRTPAATPGP) are compositionally biased toward low complexity. LIM zinc-binding domains follow at residues 239–297 (PLCY…TRYA), 298–357 (PSCA…MFGT), and 358–416 (KCRG…FSHV).

Interacts with various PKC isoforms through the LIM zinc-binding domains. Interacts with TPM2. Interacts with TBX4 and TBX5.

It localises to the cytoplasm. The protein resides in the cytoskeleton. Its subcellular location is the myofibril. It is found in the sarcomere. The protein localises to the z line. Functionally, may function as a scaffold on which the coordinated assembly of proteins can occur. May play a role as an adapter that, via its PDZ domain, localizes LIM-binding proteins to actin filaments of both skeletal muscle and nonmuscle tissues. May be involved in bone formation. This Gallus gallus (Chicken) protein is PDZ and LIM domain protein 7 (PDLIM7).